The following is a 202-amino-acid chain: Small ribosomal subunit protein uS4c (202 aa).

One can recognise an S4 RNA-binding domain in the interval 90–153 (MRLDNVIFRL…KSEAIISKNI (64 aa)).

The protein belongs to the universal ribosomal protein uS4 family. In terms of assembly, part of the 30S ribosomal subunit. Contacts protein S5. The interaction surface between S4 and S5 is involved in control of translational fidelity.

It localises to the plastid. The protein resides in the chloroplast. One of the primary rRNA binding proteins, it binds directly to 16S rRNA where it nucleates assembly of the body of the 30S subunit. Functionally, with S5 and S12 plays an important role in translational accuracy. The chain is Small ribosomal subunit protein uS4c (rps4) from Hypopterygium didictyon.